The chain runs to 431 residues: MATIEAVGAREILDSRGNPTVEVEVLLDDGTFARAAVPSGASTGAYEANERRDGDKGRYGGKGVEQAVEAVIEEVGPALVGHDAHEQRIIDRVMLDLDGTPTKSRLGANAILGVSLAVAKAAASAADLPLFRYLGGPNAHVLPVPMMNIVNGGAHADTGVAIQEFMIAPVGAASFREALRWGAETYHALKSVLKQRGLATGLGDEGGFAPDLPSNKDALDLIVEAIGKTGFAVGSDIALALDVAATEFHGADGYDFEGSKRSAEWMTGYYEGLVSEYPLVSIEDPLSEDDWDGWQHITNALGGKLQLVGDDLFVTNPERLQKGIDLSAGNSMLVKVNQIGSLTETLDAVDLAHRNGFSTMMSHRSGETEDTTIADLAVAVGSGQIKTGAPARSERVAKYNQLLRIEEELDDAAVYAGAKAFPRSAGFTGRA.

Q163 lines the (2R)-2-phosphoglycerate pocket. E205 functions as the Proton donor in the catalytic mechanism. The Mg(2+) site is built by D242, E283, and D310. (2R)-2-phosphoglycerate is bound by residues K335, R364, S365, and K386. K335 acts as the Proton acceptor in catalysis.

It belongs to the enolase family. Requires Mg(2+) as cofactor.

The protein resides in the cytoplasm. It is found in the secreted. Its subcellular location is the cell surface. The catalysed reaction is (2R)-2-phosphoglycerate = phosphoenolpyruvate + H2O. It functions in the pathway carbohydrate degradation; glycolysis; pyruvate from D-glyceraldehyde 3-phosphate: step 4/5. In terms of biological role, catalyzes the reversible conversion of 2-phosphoglycerate (2-PG) into phosphoenolpyruvate (PEP). It is essential for the degradation of carbohydrates via glycolysis. The protein is Enolase of Kineococcus radiotolerans (strain ATCC BAA-149 / DSM 14245 / SRS30216).